The primary structure comprises 904 residues: Mdm2-binding protein (904 aa).

The interval 19 to 38 (ASREAEHGPEVSSGEGTENQ) is disordered. The segment at 521 to 904 (MILRKMDKIK…DWVLEKTSKK (384 aa)) is interaction with MDM2. Phosphoserine is present on residues serine 597, serine 639, serine 703, and serine 707. Disordered stretches follow at residues 754-784 (ESSE…TERS) and 800-830 (PKLA…SQKH). Positions 812–830 (SMHESKTSRQIKESRSQKH) are enriched in basic and acidic residues.

It belongs to the MTBP family. Interacts with MDM2.

In terms of biological role, inhibits cell migration in vitro and suppresses the invasive behavior of tumor cells. May play a role in MDM2-dependent p53/TP53 homeostasis in unstressed cells. Inhibits autoubiquitination of MDM2, thereby enhancing MDM2 stability. This promotes MDM2-mediated ubiquitination of p53/TP53 and its subsequent degradation. The protein is Mdm2-binding protein (MTBP) of Homo sapiens (Human).